Consider the following 136-residue polypeptide: Large ribosomal subunit protein uL16c (136 aa).

Belongs to the universal ribosomal protein uL16 family. In terms of assembly, part of the 50S ribosomal subunit.

Its subcellular location is the plastid. It localises to the chloroplast. This is Large ribosomal subunit protein uL16c from Chloranthus spicatus (Chulantree).